Consider the following 92-residue polypeptide: Small ribosomal subunit protein uS19 (92 aa).

The protein belongs to the universal ribosomal protein uS19 family.

Functionally, protein S19 forms a complex with S13 that binds strongly to the 16S ribosomal RNA. The protein is Small ribosomal subunit protein uS19 of Bacillus licheniformis (strain ATCC 14580 / DSM 13 / JCM 2505 / CCUG 7422 / NBRC 12200 / NCIMB 9375 / NCTC 10341 / NRRL NRS-1264 / Gibson 46).